Reading from the N-terminus, the 359-residue chain is Mitochondrial glutathione transporter SLC25A39 (359 aa).

The Mitochondrial intermembrane portion of the chain corresponds to 1–14 (MDDQDPGGISPLQQ). 3 Solcar repeats span residues 9–151 (ISPL…LKAF), 159–243 (SDLY…VKSW), and 253–347 (TSVG…GKSF). The helical transmembrane segment at 15 to 35 (MVASGAGAVVTSLFMTPLDVV) threads the bilayer. Topologically, residues 36–121 (KVRLQSQRPS…VKIVRHEGTR (86 aa)) are mitochondrial matrix. [2Fe-2S] cluster-binding residues include cysteine 74, cysteine 78, cysteine 88, and cysteine 94. A helical membrane pass occupies residues 122 to 142 (TLWSGLPATLVMTVPATAIYF). Topologically, residues 143 to 164 (TAYDQLKAFLCGQSLTSDLYAP) are mitochondrial intermembrane. The chain crosses the membrane as a helical span at residues 165–185 (MVAGALARMGTVTVVSPLELV). Over 186–214 (RTKLQAQHVSYRELASSVQAAVTQGGWRS) the chain is Mitochondrial matrix. The helical transmembrane segment at 215-235 (LWLGWGPTALRDVPFSALYWF) threads the bilayer. Residues 236 to 255 (NYELVKSWLSGLRPKDQTSV) are Mitochondrial intermembrane-facing. Residues 256–276 (GISFVAGGISGMVAATLTLPF) traverse the membrane as a helical segment. Residues 277–317 (DVVKTQRQMSLGAVEAVRVKPPRVDSTWLLLRRIRAESGTR) lie on the Mitochondrial matrix side of the membrane. A helical membrane pass occupies residues 318 to 338 (GLFAGFLPRIIKAAPSCAIMI). Over 339-359 (STYEFGKSFFQRLNQEQPLGR) the chain is Mitochondrial intermembrane.

This sequence belongs to the mitochondrial carrier (TC 2.A.29) family. In terms of processing, cleaved and degraded by AFG3L2; degradation by AFG3L2 is regulated by the ability of SLC25A39 to bind iron-sulfur. In absence of mitochondrial glutathione, SLC25A39 binds iron-sulfur, preventing cleavage and degradation by AFG3L2. The presence of mitochondrial glutathione prevents iron-sulfur-binding to SLC25A39, promoting cleavage and degradation by AFG3L2. Abundant expression in bone marrow, spleen, testis and kidney.

Its subcellular location is the mitochondrion inner membrane. The catalysed reaction is glutathione(in) = glutathione(out). With respect to regulation, the activity of SLC25A39 is regulated by levels of mitochondrial glutathione via its ability to bind [2Fe-2S] iron-sulfur cluster. Upon physiological levels of mitochondrial glutathione, glutathione prevents iron-sulfur-binding to SLC25A39 promoting cleavage and degradation by AFG3L2. Upon depletion of mitochondrial glutathione, SLC25A39 binds iron-sulfur, preventing cleavage and degradation by AFG3L2. Mitochondrial transporter required for glutathione import into mitochondria. Glutathione, which plays key roles in oxidative metabolism, is produced exclusively in the cytosol and is imported in many organelles. Mitochondrial glutathione is required for the activity and stability of proteins containing iron-sulfur clusters, as well as erythropoiesis. This chain is Mitochondrial glutathione transporter SLC25A39, found in Mus musculus (Mouse).